A 1978-amino-acid chain; its full sequence is Protein MOR1 (1978 aa).

HEAT repeat units follow at residues Asp-48–Ser-86 and Ile-165–Lys-202. The disordered stretch occupies residues Ala-230–Val-264. A compositionally biased stretch (basic and acidic residues) spans Ile-238–Glu-247. 3 HEAT repeats span residues Gly-322–Thr-359, Ala-363–Leu-400, and Lys-442–Met-479. Residues Ile-501 to Pro-587 are disordered. The segment covering Ala-510–Gly-527 has biased composition (low complexity). Residues Gly-565–Lys-577 show a composition bias toward basic and acidic residues. HEAT repeat units follow at residues Asp-849 to Lys-886, Pro-890 to Pro-928, Lys-932 to Leu-969, and Val-1008 to Gln-1045. The interval Ser-1087–Gly-1115 is disordered. Polar residues predominate over residues Ile-1093 to Arg-1107. HEAT repeat units lie at residues Leu-1230 to Ala-1253, Glu-1254 to Gln-1286, Ala-1287 to Thr-1325, and Gly-1328 to Ala-1365. The span at Met-1393–Glu-1403 shows a compositional bias: basic and acidic residues. A disordered region spans residues Met-1393–Pro-1431. One copy of the HEAT 14 repeat lies at Arg-1535–Asp-1575. The interval Ala-1837 to Asp-1862 is disordered.

The protein belongs to the TOG/XMAP215 family. As to expression, expressed in roots, cotyledons, rosette leaves, stems, open flowers and green siliques.

It localises to the cytoplasm. It is found in the cytoskeleton. Its subcellular location is the phragmoplast. The protein localises to the spindle. Its function is as follows. Microtubule-binding protein that is essential for cortical microtubules organization and function. Essential for maintaining the interphase cortical array and for correct morphogenesis. Promotes rapid growth and shrinkage of microtubules and suppresses the pausing of interphase microtubules. Regulates the structure and function of microtubule arrays during mitosis and cytokinesis. Probably not required for cellulose microfibrils alignment in roots. The chain is Protein MOR1 (MOR1) from Arabidopsis thaliana (Mouse-ear cress).